A 258-amino-acid polypeptide reads, in one-letter code: Global transcriptional regulator CodY (258 aa).

The GAF domain stretch occupies residues 1 to 156 (MSSLLDKTRM…SATIIGLEIL (156 aa)). The segment at residues 204 to 223 (ASKIADKVGITRSVIVNALR) is a DNA-binding region (H-T-H motif).

The protein belongs to the CodY family.

It localises to the cytoplasm. Functionally, DNA-binding global transcriptional regulator which is involved in the adaptive response to starvation and acts by directly or indirectly controlling the expression of numerous genes in response to nutrient availability. During rapid exponential growth, CodY is highly active and represses genes whose products allow adaptation to nutrient depletion. The protein is Global transcriptional regulator CodY of Clostridium botulinum (strain Okra / Type B1).